The following is a 167-amino-acid chain: Phospholipase A2 (167 aa).

Residues 1–18 (MQVVLGSLFLLLLSTSHG) form the signal peptide. A propeptide spanning residues 19 to 33 (WQIRDRIGDNELEER) is cleaved from the precursor. Residues W41, G43, and G45 each contribute to the Ca(2+) site. Intrachain disulfides connect C42/C64, C63/C103, C70/C96, C94/C128, and C138/C146. N-linked (GlcNAc...) asparagine glycosylation is present at N46. The active site involves H67. D68 contributes to the Ca(2+) binding site. Residue D97 is part of the active site.

This sequence belongs to the phospholipase A2 family. Group III subfamily. Ca(2+) serves as cofactor. N-glycosylated; contains mannose, N-acetylglucosamine and fucose alphal-6 and/or alphal-3 linked to the innermost N-acetylglucosamine. As to expression, expressed by the venom gland.

Its subcellular location is the secreted. It catalyses the reaction a 1,2-diacyl-sn-glycero-3-phosphocholine + H2O = a 1-acyl-sn-glycero-3-phosphocholine + a fatty acid + H(+). In vivo, intraplantar injection in mice cause spontaneous pain behaviors and paw swelling. PLA2 catalyzes the calcium-dependent hydrolysis of the 2-acyl groups in 3-sn-phosphoglycerides. This chain is Phospholipase A2, found in Apis mellifera (Honeybee).